A 149-amino-acid chain; its full sequence is Deoxyuridine 5'-triphosphate nucleotidohydrolase (149 aa).

Substrate is bound by residues 68-70 (RSG), N81, 85-87 (LID), and M95.

Belongs to the dUTPase family. Mg(2+) serves as cofactor.

It carries out the reaction dUTP + H2O = dUMP + diphosphate + H(+). It functions in the pathway pyrimidine metabolism; dUMP biosynthesis; dUMP from dCTP (dUTP route): step 2/2. This enzyme is involved in nucleotide metabolism: it produces dUMP, the immediate precursor of thymidine nucleotides and it decreases the intracellular concentration of dUTP so that uracil cannot be incorporated into DNA. In Bordetella pertussis (strain Tohama I / ATCC BAA-589 / NCTC 13251), this protein is Deoxyuridine 5'-triphosphate nucleotidohydrolase.